Reading from the N-terminus, the 308-residue chain is Aspartate carbamoyltransferase catalytic subunit (308 aa).

Carbamoyl phosphate is bound by residues Arg-57 and Thr-58. An L-aspartate-binding site is contributed by Lys-86. 3 residues coordinate carbamoyl phosphate: Arg-107, His-135, and Gln-138. L-aspartate is bound by residues Arg-168 and Arg-229. Positions 268 and 269 each coordinate carbamoyl phosphate.

Belongs to the aspartate/ornithine carbamoyltransferase superfamily. ATCase family. Heterooligomer of catalytic and regulatory chains.

The catalysed reaction is carbamoyl phosphate + L-aspartate = N-carbamoyl-L-aspartate + phosphate + H(+). It functions in the pathway pyrimidine metabolism; UMP biosynthesis via de novo pathway; (S)-dihydroorotate from bicarbonate: step 2/3. Functionally, catalyzes the condensation of carbamoyl phosphate and aspartate to form carbamoyl aspartate and inorganic phosphate, the committed step in the de novo pyrimidine nucleotide biosynthesis pathway. In Pyrococcus horikoshii (strain ATCC 700860 / DSM 12428 / JCM 9974 / NBRC 100139 / OT-3), this protein is Aspartate carbamoyltransferase catalytic subunit.